Here is a 1057-residue protein sequence, read N- to C-terminus: Probable E3 ubiquitin-protein ligase HERC4 (1057 aa).

RCC1 repeat units lie at residues 1 to 51, 52 to 101, 102 to 154, 156 to 207, 208 to 259, 261 to 311, and 313 to 368; these read MLCW…FVLD, DGTV…ALND, KGQV…ALSK, SEVF…VLTL, SGAI…ALTK, GGVF…AFVP, and SGRI…KRIF. Residues 730 to 1057 form the HECT domain; it reads KNIDYKKPLK…IDHNEGFSLI (328 aa). The Glycyl thioester intermediate role is filled by C1025.

Expressed in brain and testis and detected in heart and placenta.

Its subcellular location is the cytoplasm. It is found in the cytosol. The enzyme catalyses S-ubiquitinyl-[E2 ubiquitin-conjugating enzyme]-L-cysteine + [acceptor protein]-L-lysine = [E2 ubiquitin-conjugating enzyme]-L-cysteine + N(6)-ubiquitinyl-[acceptor protein]-L-lysine.. The protein operates within protein modification; protein ubiquitination. In terms of biological role, probable E3 ubiquitin-protein ligase involved in either protein trafficking or in the distribution of cellular structures. Required for spermatozoon maturation and fertility, and for the removal of the cytoplasmic droplet of the spermatozoon. E3 ubiquitin-protein ligases accept ubiquitin from an E2 ubiquitin-conjugating enzyme in the form of a thioester and then directly transfer it to targeted substrates. The chain is Probable E3 ubiquitin-protein ligase HERC4 (HERC4) from Homo sapiens (Human).